The chain runs to 293 residues: Cytidine deaminase 6 (293 aa).

CMP/dCMP-type deaminase domains follow at residues 16–147 and 178–293; these read RGPS…FGPD and EDCS…TNKN. 57 to 59 is a substrate binding site; it reads NVE. His70 lines the Zn(2+) pocket. Catalysis depends on Glu72, which acts as the Proton donor. Residues Cys103 and Cys106 each coordinate Zn(2+).

This sequence belongs to the cytidine and deoxycytidylate deaminase family. Homodimer. The cofactor is Zn(2+).

It carries out the reaction cytidine + H2O + H(+) = uridine + NH4(+). It catalyses the reaction 2'-deoxycytidine + H2O + H(+) = 2'-deoxyuridine + NH4(+). Its function is as follows. This enzyme scavenges exogenous and endogenous cytidine and 2'-deoxycytidine for UMP synthesis. The sequence is that of Cytidine deaminase 6 (CDA6) from Arabidopsis thaliana (Mouse-ear cress).